Reading from the N-terminus, the 191-residue chain is Glycerol-3-phosphate acyltransferase (191 aa).

Helical transmembrane passes span 5–25, 51–71, 78–98, 114–134, and 153–173; these read IILI…IAKI, LAVL…YTAQ, DLYI…PIWL, IALN…VFFI, and SFFF…LIFL.

It belongs to the PlsY family. In terms of assembly, probably interacts with PlsX.

It localises to the cell membrane. The catalysed reaction is an acyl phosphate + sn-glycerol 3-phosphate = a 1-acyl-sn-glycero-3-phosphate + phosphate. It functions in the pathway lipid metabolism; phospholipid metabolism. Functionally, catalyzes the transfer of an acyl group from acyl-phosphate (acyl-PO(4)) to glycerol-3-phosphate (G3P) to form lysophosphatidic acid (LPA). This enzyme utilizes acyl-phosphate as fatty acyl donor, but not acyl-CoA or acyl-ACP. This Wolbachia pipientis subsp. Culex pipiens (strain wPip) protein is Glycerol-3-phosphate acyltransferase.